The primary structure comprises 357 residues: Aspartate carbamoyltransferase catalytic subunit (357 aa).

Polar residues predominate over residues 1-17 (MSNSIDSQSIPTISPTD). Residues 1–21 (MSNSIDSQSIPTISPTDYTKF) are disordered. Positions 97 and 98 each coordinate carbamoyl phosphate. Position 125 (Lys125) interacts with L-aspartate. Arg147, His177, and Gln180 together coordinate carbamoyl phosphate. Positions 211 and 266 each coordinate L-aspartate. Positions 307 and 308 each coordinate carbamoyl phosphate.

Belongs to the aspartate/ornithine carbamoyltransferase superfamily. ATCase family. In terms of assembly, heterododecamer (2C3:3R2) of six catalytic PyrB chains organized as two trimers (C3), and six regulatory PyrI chains organized as three dimers (R2).

It carries out the reaction carbamoyl phosphate + L-aspartate = N-carbamoyl-L-aspartate + phosphate + H(+). It functions in the pathway pyrimidine metabolism; UMP biosynthesis via de novo pathway; (S)-dihydroorotate from bicarbonate: step 2/3. Catalyzes the condensation of carbamoyl phosphate and aspartate to form carbamoyl aspartate and inorganic phosphate, the committed step in the de novo pyrimidine nucleotide biosynthesis pathway. The protein is Aspartate carbamoyltransferase catalytic subunit of Psychrobacter arcticus (strain DSM 17307 / VKM B-2377 / 273-4).